Here is a 206-residue protein sequence, read N- to C-terminus: Recombination protein RecR (206 aa).

A C4-type zinc finger spans residues 58–73 (CNICGYITEKNICNFC). The Toprim domain occupies 81 to 178 (STIMIVADNR…KITKLAYGIP (98 aa)).

This sequence belongs to the RecR family.

Its function is as follows. May play a role in DNA repair. It seems to be involved in an RecBC-independent recombinational process of DNA repair. It may act with RecF and RecO. This is Recombination protein RecR from Phytoplasma mali (strain AT).